A 428-amino-acid chain; its full sequence is Dihydroorotase (428 aa).

Residues His-59 and His-61 each coordinate Zn(2+). Substrate contacts are provided by residues 61-63 (HLR) and Asn-93. The Zn(2+) site is built by Asp-151, His-178, and His-231. Asn-277 lines the substrate pocket. Asp-304 provides a ligand contact to Zn(2+). The active site involves Asp-304. Substrate contacts are provided by residues His-308 and 322-323 (FG).

Belongs to the metallo-dependent hydrolases superfamily. DHOase family. Class I DHOase subfamily. Zn(2+) serves as cofactor.

It catalyses the reaction (S)-dihydroorotate + H2O = N-carbamoyl-L-aspartate + H(+). It functions in the pathway pyrimidine metabolism; UMP biosynthesis via de novo pathway; (S)-dihydroorotate from bicarbonate: step 3/3. Its function is as follows. Catalyzes the reversible cyclization of carbamoyl aspartate to dihydroorotate. This is Dihydroorotase from Bacillus cereus (strain ZK / E33L).